Here is a 313-residue protein sequence, read N- to C-terminus: Porphobilinogen deaminase (313 aa).

Residue Cys242 is modified to S-(dipyrrolylmethanemethyl)cysteine.

Belongs to the HMBS family. Monomer. Requires dipyrromethane as cofactor.

The catalysed reaction is 4 porphobilinogen + H2O = hydroxymethylbilane + 4 NH4(+). It functions in the pathway porphyrin-containing compound metabolism; protoporphyrin-IX biosynthesis; coproporphyrinogen-III from 5-aminolevulinate: step 2/4. Its function is as follows. Tetrapolymerization of the monopyrrole PBG into the hydroxymethylbilane pre-uroporphyrinogen in several discrete steps. The protein is Porphobilinogen deaminase of Yersinia enterocolitica serotype O:8 / biotype 1B (strain NCTC 13174 / 8081).